A 314-amino-acid polypeptide reads, in one-letter code: Secreted frizzled-related protein 1 (314 aa).

The N-terminal stretch at 1–31 (MGVGRSARGRGGAASGVLLALAAALLAAGSA) is a signal peptide. Positions 53 to 169 (TKPPQCVDIP…FPEGDVCIAM (117 aa)) constitute an FZ domain. 5 disulfides stabilise this stretch: Cys-58–Cys-121, Cys-68–Cys-114, Cys-105–Cys-140, Cys-129–Cys-166, and Cys-133–Cys-157. N-linked (GlcNAc...) asparagine glycosylation is present at Asn-173. Intrachain disulfides connect Cys-186-Cys-256, Cys-189-Cys-258, and Cys-203-Cys-306. The region spanning 186–306 (CPPCDNELKS…FMKRMKNHEC (121 aa)) is the NTR domain.

Belongs to the secreted frizzled-related protein (sFRP) family. Interacts with WNT8, WNT1, WNT2, WNT4 and FRZD6. Interacts with MYOC. As to expression, highly expressed in kidney and embryonic heart. Also highly expressed in the eye, where it is principally localized to the ciliary body and the lens epithelium. Weaker expression in heart, lung and brain. In the brain, is expressed exclusively in the choroid plexus.

Its subcellular location is the secreted. Its function is as follows. Soluble frizzled-related proteins (sFRPS) function as modulators of Wnt signaling through direct interaction with Wnts. They have a role in regulating cell growth and differentiation in specific cell types. SFRP1 decreases intracellular beta-catenin levels. Has antiproliferative effects on vascular cells, in vitro and in vivo, and can induce, in vivo, an angiogenic response. In vascular cell cycle, delays the G1 phase and entry into the S phase. In kidney development, inhibits tubule formation and bud growth in metanephroi. Inhibits WNT1/WNT4-mediated TCF-dependent transcription. The sequence is that of Secreted frizzled-related protein 1 from Mus musculus (Mouse).